The sequence spans 328 residues: uncharacterized protein (328 aa).

Serine 170 is modified (phosphoserine).

The protein resides in the cytoplasm. The protein localises to the nucleus. This is an uncharacterized protein from Schizosaccharomyces pombe (strain 972 / ATCC 24843) (Fission yeast).